The chain runs to 372 residues: Partitioning defective 6 homolog beta (372 aa).

Position 11 is a phosphoserine (Ser11). A PB1 domain is found at 16 to 96 (TMEVKSKFGA…PLLRIFIQKK (81 aa)). The tract at residues 126–253 (RKKPHIVISM…ITVRPANQRN (128 aa)) is interaction with PARD3 and CDC42. One can recognise a Pseudo-CRIB domain in the interval 133-150 (ISMPQDFRPVSSIIDVDI). A PDZ domain is found at 157-250 (RVRLYKYGTE…NLIITVRPAN (94 aa)). The span at 253-272 (NNVVRNSRTSGSSGQSTDNS) shows a compositional bias: polar residues. A disordered region spans residues 253–292 (NNVVRNSRTSGSSGQSTDNSLLGYPQQIEPSFEPEDEDSE).

The protein belongs to the PAR6 family. As to quaternary structure, interacts with PARD3. Interacts with GTP-bound forms of CDC42 and RAC1. Interacts with GTP-bound RHOQ/TC10. Interacts with PALS1. Interacts with the N-terminal part of PRKCI and PRKCZ. Part of a complex with PARD3, CDC42 or RAC1 and PRKCI or PRKCZ. Part of a complex with LLGL1 and PRKCI. Interacts with PARD3B. Interacts with ECT2. As to expression, expressed in pancreas and in both adult and fetal kidney. Weakly expressed in placenta and lung. Not expressed in other tissues.

The protein resides in the cytoplasm. Its subcellular location is the cell membrane. The protein localises to the cell junction. It localises to the tight junction. Functionally, adapter protein involved in asymmetrical cell division and cell polarization processes. Probably involved in formation of epithelial tight junctions. Association with PARD3 may prevent the interaction of PARD3 with F11R/JAM1, thereby preventing tight junction assembly. The PARD6-PARD3 complex links GTP-bound Rho small GTPases to atypical protein kinase C proteins. The protein is Partitioning defective 6 homolog beta (PARD6B) of Homo sapiens (Human).